We begin with the raw amino-acid sequence, 507 residues long: Probable circularly permuted 1,3-beta-glucanase P23A10.11c YJL171C (507 aa).

An N-terminal signal peptide occupies residues 1–22 (MIAKSFIASFLFLCFAFSGVKA). The segment covering 228–264 (AAPPDSASESTPASTSYASSTTSATSTSTTSGSSGSS) has biased composition (low complexity). The segment at 228–266 (AAPPDSASESTPASTSYASSTTSATSTSTTSGSSGSSDW) is disordered. Residues 412 to 417 (EFDIFE) carry the ExDxxE motif motif. N480 carries N-linked (GlcNAc...) asparagine glycosylation.

It belongs to the PGA52 family.

The protein localises to the secreted. It catalyses the reaction Hydrolysis of (1-&gt;3)-beta-D-glucosidic linkages in (1-&gt;3)-beta-D-glucans.. In terms of biological role, probable circularly permuted 1,3-beta-glucanase involved in cell wall modification through beta-1,3-glucan network alterations such as increased branching or remodeling. The sequence is that of Probable circularly permuted 1,3-beta-glucanase P23A10.11c YJL171C from Schizosaccharomyces pombe (strain 972 / ATCC 24843) (Fission yeast).